A 228-amino-acid polypeptide reads, in one-letter code: Phosphoribosylformylglycinamidine synthase subunit PurQ (228 aa).

The 227-residue stretch at 2–228 folds into the Glutamine amidotransferase type-1 domain; it reads TVVVVQFGGS…DGKGILQAFG (227 aa). The active-site Nucleophile is Cys88. Active-site residues include His205 and Glu207.

As to quaternary structure, part of the FGAM synthase complex composed of 1 PurL, 1 PurQ and 2 PurS subunits.

The protein localises to the cytoplasm. The catalysed reaction is N(2)-formyl-N(1)-(5-phospho-beta-D-ribosyl)glycinamide + L-glutamine + ATP + H2O = 2-formamido-N(1)-(5-O-phospho-beta-D-ribosyl)acetamidine + L-glutamate + ADP + phosphate + H(+). It carries out the reaction L-glutamine + H2O = L-glutamate + NH4(+). Its pathway is purine metabolism; IMP biosynthesis via de novo pathway; 5-amino-1-(5-phospho-D-ribosyl)imidazole from N(2)-formyl-N(1)-(5-phospho-D-ribosyl)glycinamide: step 1/2. Its function is as follows. Part of the phosphoribosylformylglycinamidine synthase complex involved in the purines biosynthetic pathway. Catalyzes the ATP-dependent conversion of formylglycinamide ribonucleotide (FGAR) and glutamine to yield formylglycinamidine ribonucleotide (FGAM) and glutamate. The FGAM synthase complex is composed of three subunits. PurQ produces an ammonia molecule by converting glutamine to glutamate. PurL transfers the ammonia molecule to FGAR to form FGAM in an ATP-dependent manner. PurS interacts with PurQ and PurL and is thought to assist in the transfer of the ammonia molecule from PurQ to PurL. The chain is Phosphoribosylformylglycinamidine synthase subunit PurQ from Haloquadratum walsbyi (strain DSM 16790 / HBSQ001).